The sequence spans 66 residues: SPbeta prophage-derived uncharacterized protein YopM (66 aa).

The protein is SPbeta prophage-derived uncharacterized protein YopM (yopM) of Bacillus subtilis (strain 168).